A 378-amino-acid polypeptide reads, in one-letter code: Deoxyguanosinetriphosphate triphosphohydrolase-like protein (378 aa).

An HD domain is found at 62–198 (RLTHTIEVAQ…AAVADDVAYN (137 aa)).

Belongs to the dGTPase family. Type 2 subfamily.

The polypeptide is Deoxyguanosinetriphosphate triphosphohydrolase-like protein (Paracoccus denitrificans (strain Pd 1222)).